Here is a 206-residue protein sequence, read N- to C-terminus: ATP phosphoribosyltransferase (206 aa).

This sequence belongs to the ATP phosphoribosyltransferase family. Short subfamily. In terms of assembly, heteromultimer composed of HisG and HisZ subunits.

The protein resides in the cytoplasm. It catalyses the reaction 1-(5-phospho-beta-D-ribosyl)-ATP + diphosphate = 5-phospho-alpha-D-ribose 1-diphosphate + ATP. It functions in the pathway amino-acid biosynthesis; L-histidine biosynthesis; L-histidine from 5-phospho-alpha-D-ribose 1-diphosphate: step 1/9. Functionally, catalyzes the condensation of ATP and 5-phosphoribose 1-diphosphate to form N'-(5'-phosphoribosyl)-ATP (PR-ATP). Has a crucial role in the pathway because the rate of histidine biosynthesis seems to be controlled primarily by regulation of HisG enzymatic activity. This is ATP phosphoribosyltransferase from Sulfurovum sp. (strain NBC37-1).